A 127-amino-acid chain; its full sequence is Arginine decarboxylase proenzyme (127 aa).

S72 (schiff-base intermediate with substrate; via pyruvic acid) is an active-site residue. Position 72 is a pyruvic acid (Ser); by autocatalysis (S72). H77 functions as the Proton acceptor; for processing activity in the catalytic mechanism. The active-site Proton donor; for catalytic activity is C92.

Belongs to the prokaryotic AdoMetDC family. Type 1 subfamily. As to quaternary structure, heterooctamer of four alpha and four beta chains arranged as a tetramer of alpha/beta heterodimers. It depends on pyruvate as a cofactor. Post-translationally, is synthesized initially as an inactive proenzyme. Formation of the active enzyme involves a self-maturation process in which the active site pyruvoyl group is generated from an internal serine residue via an autocatalytic post-translational modification. Two non-identical subunits are generated from the proenzyme in this reaction, and the pyruvate is formed at the N-terminus of the alpha chain, which is derived from the carboxyl end of the proenzyme. The post-translation cleavage follows an unusual pathway, termed non-hydrolytic serinolysis, in which the side chain hydroxyl group of the serine supplies its oxygen atom to form the C-terminus of the beta chain, while the remainder of the serine residue undergoes an oxidative deamination to produce ammonia and the pyruvoyl group blocking the N-terminus of the alpha chain.

The catalysed reaction is L-arginine + H(+) = agmatine + CO2. Its pathway is amine and polyamine biosynthesis; agmatine biosynthesis; agmatine from L-arginine: step 1/1. Functionally, specifically catalyzes the decarboxylation of L-arginine to agmatine. Has no S-adenosylmethionine decarboxylase (AdoMetDC) activity. The polypeptide is Arginine decarboxylase proenzyme (Staphylothermus marinus (strain ATCC 43588 / DSM 3639 / JCM 9404 / F1)).